The primary structure comprises 236 residues: 3-deoxy-D-manno-octulosonic acid kinase (236 aa).

Residue Asp167 is part of the active site.

This sequence belongs to the protein kinase superfamily. KdkA/RfaP family.

The protein resides in the cell inner membrane. The enzyme catalyses an alpha-Kdo-(2-&gt;6)-lipid IVA + ATP = a 4-O-phospho-alpha-Kdo-(2-&gt;6)-lipid IVA + ADP + H(+). It participates in bacterial outer membrane biogenesis; LPS core biosynthesis. Functionally, catalyzes the ATP-dependent phosphorylation of the 3-deoxy-D-manno-octulosonic acid (Kdo) residue in Kdo-lipid IV(A) at the 4-OH position. The protein is 3-deoxy-D-manno-octulosonic acid kinase of Vibrio vulnificus (strain YJ016).